Here is a 1485-residue protein sequence, read N- to C-terminus: Chromosome partition protein MukB (1485 aa).

34-41 (GGNGAGKS) contributes to the ATP binding site. Coiled-coil stretches lie at residues 311–480 (EMAR…EAYR) and 519–665 (GARL…RLSQ). Residues 666–783 (PGGAEDARLI…SLPLFGRAAR (118 aa)) are flexible hinge. Coiled coils occupy residues 832 to 1115 (NDPE…QAKA) and 1209 to 1265 (IDAI…LQSV).

The protein belongs to the SMC family. MukB subfamily. Homodimerization via its hinge domain. Binds to DNA via its C-terminal region. Interacts, and probably forms a ternary complex, with MukE and MukF via its C-terminal region. The complex formation is stimulated by calcium or magnesium. Interacts with tubulin-related protein FtsZ.

The protein resides in the cytoplasm. It is found in the nucleoid. Plays a central role in chromosome condensation, segregation and cell cycle progression. Functions as a homodimer, which is essential for chromosome partition. Involved in negative DNA supercoiling in vivo, and by this means organize and compact chromosomes. May achieve or facilitate chromosome segregation by condensation DNA from both sides of a centrally located replisome during cell division. The chain is Chromosome partition protein MukB from Edwardsiella ictaluri (strain 93-146).